A 133-amino-acid chain; its full sequence is U6 snRNA-associated Sm-like protein LSm1 (133 aa).

The 76-residue stretch at 5-80 (PGTASLIEDI…VVLLGEIDLE (76 aa)) folds into the Sm domain. Ser-123 is subject to Phosphoserine. Position 129 is a phosphothreonine (Thr-129).

Belongs to the snRNP Sm proteins family. In terms of assembly, interacts with SLBP; interaction with SLBP occurs when histone mRNA is being rapidly degraded during the S phase. LSm subunits form a heteromer with a donut shape.

It localises to the cytoplasm. It is found in the P-body. Its function is as follows. Plays a role in the degradation of histone mRNAs, the only eukaryotic mRNAs that are not polyadenylated. Probably also part of an LSm subunits-containing complex involved in the general process of mRNA degradation. In Homo sapiens (Human), this protein is U6 snRNA-associated Sm-like protein LSm1 (LSM1).